Consider the following 318-residue polypeptide: Actin-related protein 2/3 complex subunit 2A (318 aa).

A disordered region spans residues Arg-297–Lys-318.

It belongs to the ARPC2 family. As to quaternary structure, component of the Arp2/3 complex composed of ARP2, ARP3, ARPC1/p41-ARC, ARPC2/p34-ARC, ARPC3/p21-ARC, ARPC4/p20-ARC and ARPC5/p16-ARC. Interacts with ARPC4. In terms of tissue distribution, expressed at low levels in all tissues with a relatively highest expression in inflorescences.

Its subcellular location is the cytoplasm. It is found in the cytoskeleton. It localises to the cell projection. In terms of biological role, functions as actin-binding component of the Arp2/3 complex which is involved in regulation of actin polymerization and together with an activating nucleation-promoting factor (NPF) mediates the formation of branched actin networks. Seems to contact the mother actin filament. Arp2/3 complex plays a critical role in the control of cell morphogenesis via the modulation of cell polarity development. In Arabidopsis thaliana (Mouse-ear cress), this protein is Actin-related protein 2/3 complex subunit 2A (ARPC2A).